The sequence spans 599 residues: Calcium-dependent protein kinase 10 (599 aa).

Gly-2 is lipidated: N-myristoyl glycine. The tract at residues 27-110 (RQDGDDALPG…PRPRVPPVKR (84 aa)) is disordered. Polar residues predominate over residues 74–84 (VSTTDTASAEQ). Positions 87-98 (SKSSAGSDSGEA) are enriched in low complexity. In terms of domain architecture, Protein kinase spans 133 to 391 (YSLGRKLGQG…AHEVLRHPWV (259 aa)). Residues 139 to 147 (LGQGQFGTT) and Lys-162 contribute to the ATP site. Asp-257 acts as the Proton acceptor in catalysis. The autoinhibitory domain stretch occupies residues 397-427 (APDKPLDSAVLSRMKQFSAMNKLKKMALRVI). 4 EF-hand domains span residues 434–469 (DEIAGLKEMFKMIDTDNSGQITFEELKVGLKKVGAN), 470–505 (LQESEIYALMQAADVDNSGTIDYGEFIAATLHMNKI), 506–541 (EREDHLFAAFQYFDKDGSGYITADELQLACEEFGLG), and 544–575 (QLEEMIREVDEDNDGRIDYNEFVAMMQKPTMG). 20 residues coordinate Ca(2+): Asp-447, Asp-449, Ser-451, Gln-453, Glu-458, Asp-483, Asp-485, Ser-487, Thr-489, Glu-494, Asp-519, Asp-521, Ser-523, Tyr-525, Glu-530, Asp-553, Asp-555, Asp-557, Arg-559, and Glu-564.

Belongs to the protein kinase superfamily. Ser/Thr protein kinase family. CDPK subfamily. Expressed in roots.

It is found in the membrane. The enzyme catalyses L-seryl-[protein] + ATP = O-phospho-L-seryl-[protein] + ADP + H(+). The catalysed reaction is L-threonyl-[protein] + ATP = O-phospho-L-threonyl-[protein] + ADP + H(+). Activated by calcium. Autophosphorylation may play an important role in the regulation of the kinase activity. May play a role in signal transduction pathways that involve calcium as a second messenger. This Oryza sativa subsp. japonica (Rice) protein is Calcium-dependent protein kinase 10.